The sequence spans 492 residues: Homoserine O-acetyltransferase (492 aa).

One can recognise an AB hydrolase-1 domain in the interval 47–352 (NAILVFHALS…KSIYGHDAFL (306 aa)). Serine 152 serves as the catalytic Nucleophile. Arginine 221 lines the substrate pocket. Catalysis depends on residues aspartate 315 and histidine 348. Aspartate 349 serves as a coordination point for substrate. CBS domains follow at residues 375–431 (MTKN…ENSI) and 440–492 (MTKN…TITI).

It belongs to the AB hydrolase superfamily. MetX family. Homodimer.

It is found in the cytoplasm. The catalysed reaction is L-homoserine + acetyl-CoA = O-acetyl-L-homoserine + CoA. It participates in amino-acid biosynthesis; L-methionine biosynthesis via de novo pathway; O-acetyl-L-homoserine from L-homoserine: step 1/1. Its function is as follows. Transfers an acetyl group from acetyl-CoA to L-homoserine, forming acetyl-L-homoserine. The protein is Homoserine O-acetyltransferase of Methanococcus vannielii (strain ATCC 35089 / DSM 1224 / JCM 13029 / OCM 148 / SB).